The chain runs to 342 residues: Phenylalanine--tRNA ligase alpha subunit (342 aa).

Glu257 is a Mg(2+) binding site.

Belongs to the class-II aminoacyl-tRNA synthetase family. Phe-tRNA synthetase alpha subunit type 1 subfamily. Tetramer of two alpha and two beta subunits. Requires Mg(2+) as cofactor.

The protein resides in the cytoplasm. It carries out the reaction tRNA(Phe) + L-phenylalanine + ATP = L-phenylalanyl-tRNA(Phe) + AMP + diphosphate + H(+). In Chlamydia trachomatis serovar D (strain ATCC VR-885 / DSM 19411 / UW-3/Cx), this protein is Phenylalanine--tRNA ligase alpha subunit (pheS).